Here is a 739-residue protein sequence, read N- to C-terminus: Probable beta-glucosidase L (739 aa).

The N-terminal stretch at 1 to 17 (MQTLFLSLLAAAVTVHA) is a signal peptide. N-linked (GlcNAc...) asparagine glycosylation is found at Asn40 and Asn224. Residue Asp252 is part of the active site. A glycan (N-linked (GlcNAc...) asparagine) is linked at Asn398.

Belongs to the glycosyl hydrolase 3 family.

The protein localises to the secreted. The catalysed reaction is Hydrolysis of terminal, non-reducing beta-D-glucosyl residues with release of beta-D-glucose.. It participates in glycan metabolism; cellulose degradation. Its function is as follows. Beta-glucosidases are one of a number of cellulolytic enzymes involved in the degradation of cellulosic biomass. Catalyzes the last step releasing glucose from the inhibitory cellobiose. In Aspergillus fumigatus (strain CBS 144.89 / FGSC A1163 / CEA10) (Neosartorya fumigata), this protein is Probable beta-glucosidase L (bglL).